Reading from the N-terminus, the 422-residue chain is Phosphoribosylamine--glycine ligase (422 aa).

The region spanning 107-314 (KAFMQRHGIP…LFDVLDRAID (208 aa)) is the ATP-grasp domain. 133–194 (VDREGAPIVI…EEFLAGEEAS (62 aa)) contacts ATP. The Mg(2+) site is built by Glu-284 and Asn-286.

The protein belongs to the GARS family. Requires Mg(2+) as cofactor. Mn(2+) serves as cofactor.

It catalyses the reaction 5-phospho-beta-D-ribosylamine + glycine + ATP = N(1)-(5-phospho-beta-D-ribosyl)glycinamide + ADP + phosphate + H(+). Its pathway is purine metabolism; IMP biosynthesis via de novo pathway; N(1)-(5-phospho-D-ribosyl)glycinamide from 5-phospho-alpha-D-ribose 1-diphosphate: step 2/2. This chain is Phosphoribosylamine--glycine ligase, found in Ralstonia nicotianae (strain ATCC BAA-1114 / GMI1000) (Ralstonia solanacearum).